A 337-amino-acid chain; its full sequence is Ferredoxin--NADP reductase (337 aa).

Residues Asp35, Gln43, Tyr48, Ala88, Phe122, Asp289, and Thr330 each contribute to the FAD site.

This sequence belongs to the ferredoxin--NADP reductase type 2 family. As to quaternary structure, homodimer. FAD serves as cofactor.

The enzyme catalyses 2 reduced [2Fe-2S]-[ferredoxin] + NADP(+) + H(+) = 2 oxidized [2Fe-2S]-[ferredoxin] + NADPH. This is Ferredoxin--NADP reductase from Ehrlichia ruminantium (strain Gardel).